The primary structure comprises 220 residues: MTQDEMKKAAGWAALKYVEKDSIVGVGTGSTVNHFIDALATMKADIEGAVSSSEASTQKMKALGIPVYDLNSVDRLSVYVDGADEINDHMDMIKGGGAALTREKIVAAVAEKFICIVDNTKQVDILGEFPLPVEVIPMARSYVARQLVKLGGDPVYREGVVTDNGNVILDVYNLKILNPKELESQINEIVGVVTNGLFAKRGADVLLVGTPDGVKTFTAK.

Substrate-binding positions include 28–31 (TGST), 81–84 (DGAD), and 94–97 (KGGG). Catalysis depends on glutamate 103, which acts as the Proton acceptor. Substrate is bound at residue lysine 121.

This sequence belongs to the ribose 5-phosphate isomerase family. In terms of assembly, homodimer.

It catalyses the reaction aldehydo-D-ribose 5-phosphate = D-ribulose 5-phosphate. It functions in the pathway carbohydrate degradation; pentose phosphate pathway; D-ribose 5-phosphate from D-ribulose 5-phosphate (non-oxidative stage): step 1/1. Functionally, catalyzes the reversible conversion of ribose-5-phosphate to ribulose 5-phosphate. This Shewanella baltica (strain OS185) protein is Ribose-5-phosphate isomerase A.